Reading from the N-terminus, the 89-residue chain is Small ribosomal subunit protein uS15 (89 aa).

Belongs to the universal ribosomal protein uS15 family. Part of the 30S ribosomal subunit. Forms a bridge to the 50S subunit in the 70S ribosome, contacting the 23S rRNA.

One of the primary rRNA binding proteins, it binds directly to 16S rRNA where it helps nucleate assembly of the platform of the 30S subunit by binding and bridging several RNA helices of the 16S rRNA. In terms of biological role, forms an intersubunit bridge (bridge B4) with the 23S rRNA of the 50S subunit in the ribosome. This is Small ribosomal subunit protein uS15 from Nitrosococcus oceani (strain ATCC 19707 / BCRC 17464 / JCM 30415 / NCIMB 11848 / C-107).